The sequence spans 237 residues: MSRLAVVFGGSRGIGRAASKLLAQRGHRIVLLSRNKEAAQSTAQSLPGENHLGLSCDVSKEEEVQKAFETINKTCGTVGFLVNAAGINRDALLLRSKSEDMLSVLHTNLLGSMLTCKAAVRNMLSHGGAIVNIGSVVGVKGNAGQCVYSASKAGLEGFTRSLAKEVASRNIRVNLVAPGLIHTDMTAGLAEEAAVRTIPLGRFGEPAEVAQAMLFLLESPYITGQILLVDGGLQLLM.

NADP(+)-binding positions include 11-14, 34-35, D57, and 84-86; these read SRGI, RN, and AAG. S135 provides a ligand contact to substrate. NADP(+) is bound by residues Y148, K152, and 181 to 183; that span reads IHT. Residue Y148 is the Proton acceptor of the active site.

It belongs to the short-chain dehydrogenases/reductases (SDR) family. As to quaternary structure, homotetramer (in vitro). Heterotetramer with HSD17B8; contains two molecules each of HSD17B8 and CBR4.

The protein resides in the mitochondrion matrix. It functions in the pathway lipid metabolism; fatty acid biosynthesis. The heterotetramer with HSD17B8 has NADH-dependent 3-ketoacyl-acyl carrier protein reductase activity, and thereby plays a role in mitochondrial fatty acid biosynthesis. Within the heterotetramer, HSD17B8 binds NADH; CBR4 binds NADPD. The homotetramer has NADPH-dependent quinone reductase activity. Both homotetramer and the heterotetramer have broad in vitro substrate specificity and can reduce 9,10-phenanthrenequinone, 1,4-benzoquinone and various other o-quinones and p-quinones. The polypeptide is Carbonyl reductase family member 4 (cbr4) (Danio rerio (Zebrafish)).